The primary structure comprises 216 residues: MSRDQGSTEYDANQRQEQHQEQHNTSYTHTDVRTNIPNIPAPFISTGVSGLGQQLVGEGFTASAARISGQSSETHVQMTPEMEAEARKDRERYERELQAINERHQRDIEGKTEAYRKQAEQEAERLRKELEKQHQRDIEFRKSLVQGTIENQKRQVELEAQLAKRELDREARLATQALDQSKMATDVQVNFDSAVGHTVSGATTVSQSEKVTQSKH.

Residues 1 to 11 show a composition bias toward polar residues; that stretch reads MSRDQGSTEYD. Disordered regions lie at residues 1–34 and 66–91; these read MSRDQGSTEYDANQRQEQHQEQHNTSYTHTDVRT and RISGQSSETHVQMTPEMEAEARKDRE. The span at 12–22 shows a compositional bias: basic and acidic residues; the sequence is ANQRQEQHQEQ. Polar residues-rich tracts occupy residues 25–34 and 68–77; these read TSYTHTDVRT and SGQSSETHVQ. The stretch at 81–180 forms a coiled coil; that stretch reads EMEAEARKDR…ARLATQALDQ (100 aa). 2 CAHS motif regions span residues 115–133 and 152–170; these read YRKQAEQEAERLRKELEKQ and QKRQVELEAQLAKRELDRE.

Belongs to the Cytosolic-abundant heat soluble protein (CAHS) family.

The protein resides in the cytoplasm. In terms of biological role, CAHS proteins are cytosolic heat soluble proteins that seem to contribute to the anhydrobiosis in tardigrades, but their specific mechanisms are yet to be identified. It is possible that protection during anhydrobiosis might occur via the stabilization of vitrifying small molecules such as sugars, but not via the direct glass transition of CAHS proteins themselves. This Ramazzottius varieornatus (Water bear) protein is Cytosolic-abundant heat soluble protein 2.